A 732-amino-acid polypeptide reads, in one-letter code: Beta-galactosidase 5 (732 aa).

Positions 1–23 (MGTTILVLSKILTFLLTTMLIGS) are cleaved as a signal peptide. The active-site Proton donor is Glu187. Catalysis depends on Glu256, which acts as the Nucleophile. Asn466 carries N-linked (GlcNAc...) asparagine glycosylation.

This sequence belongs to the glycosyl hydrolase 35 family. Expressed in leaves and flowers.

The protein localises to the secreted. The protein resides in the extracellular space. It is found in the apoplast. It catalyses the reaction Hydrolysis of terminal non-reducing beta-D-galactose residues in beta-D-galactosides.. The polypeptide is Beta-galactosidase 5 (BGAL5) (Arabidopsis thaliana (Mouse-ear cress)).